The chain runs to 587 residues: uncharacterized protein (587 aa).

In terms of domain architecture, YcaO spans 61 to 426 (GKGASKKAAL…DLPNWHHDAE (366 aa)).

This is an uncharacterized protein from Haemophilus influenzae (strain ATCC 51907 / DSM 11121 / KW20 / Rd).